The chain runs to 151 residues: Proline-rich acidic protein 1 (151 aa).

An N-terminal signal peptide occupies residues 1-20 (MRRLLLVTSLVVVLLWEAGA). The disordered stretch occupies residues 71 to 151 (LTTEEKPRGQ…EDQDHIYHPQ (81 aa)).

In terms of assembly, interacts with isoform 1 and isoform 3 of MAD1L1. Interacts with MTTP. In terms of tissue distribution, highly expressed in the intestinal epithelial cells (at protein level). Abundantly expressed in the epithelial cells of the liver, kidney and cervix. Significantly down-regulated in hepatocellular carcinoma and right colon adenocarcinoma compared with the respective adjacent normal tissues. Expressed in epididymis (at protein level).

Its subcellular location is the secreted. It is found in the endoplasmic reticulum. Lipid-binding protein which promotes lipid absorption by facilitating MTTP-mediated lipid transfer (mainly triglycerides and phospholipids) and MTTP-mediated apoB lipoprotein assembly and secretion. Protects the gastrointestinal epithelium from irradiation-induced apoptosis. May play an important role in maintaining normal growth homeostasis in epithelial cells. Involved in p53/TP53-dependent cell survival after DNA damage. May down-regulate the expression of MAD1L1 and exert a suppressive role in mitotic spindle assembly checkpoint in hepatocellular carcinomas. The chain is Proline-rich acidic protein 1 (PRAP1) from Homo sapiens (Human).